The primary structure comprises 124 residues: Small ribosomal subunit protein bS6 (124 aa).

It belongs to the bacterial ribosomal protein bS6 family.

Its function is as follows. Binds together with bS18 to 16S ribosomal RNA. The sequence is that of Small ribosomal subunit protein bS6 from Rippkaea orientalis (strain PCC 8801 / RF-1) (Cyanothece sp. (strain PCC 8801)).